The primary structure comprises 48 residues: MHNFKSTPPADSLSDDFTSCSEWCRKMWEETFDDAYIKLYELWKSRGQ.

The polypeptide is Protein 1.8 (Escherichia coli (Bacteriophage T7)).